Reading from the N-terminus, the 365-residue chain is MFLKHLTLQNFRSYEELSLDFNSRLIFFVGDNGEGKTNLLEAICMLSWLKSFRESEDSNLIRWGSENYFLRGKIKGDQKESVLEVGFTAKPTVKRKLKFNQEEVKKRTDLIGKFITVLLTPMDLKIIEGGPAERRKFIDAFISSFDPFYLECLLEYNKILKHRNALLKTGISDASHLSIWDRKLIEKGVLILNKRKEIVFGLNSFYQPNLNKLSGGKDELEMIYGPNVKDKDEFVEKLGRNLGKDLRLGYTSVGIHRDDLFIGADKRDITEFGSQGQKRSTVIALKAATFNYYRNVLDTMPVLLIDDVIRELDVKRREYFVDLVINAGQAFFTTTDLEGIQDYVGKLKDQKQIFLIQQGNIQFAK.

Residue 30–37 participates in ATP binding; the sequence is GDNGEGKT.

Belongs to the RecF family.

The protein resides in the cytoplasm. In terms of biological role, the RecF protein is involved in DNA metabolism; it is required for DNA replication and normal SOS inducibility. RecF binds preferentially to single-stranded, linear DNA. It also seems to bind ATP. This chain is DNA replication and repair protein RecF, found in Leptospira borgpetersenii serovar Hardjo-bovis (strain JB197).